Reading from the N-terminus, the 396-residue chain is NADH-quinone oxidoreductase subunit D (396 aa).

Belongs to the complex I 49 kDa subunit family. As to quaternary structure, NDH-1 is composed of 14 different subunits. Subunits NuoB, C, D, E, F, and G constitute the peripheral sector of the complex.

Its subcellular location is the cell inner membrane. The enzyme catalyses a quinone + NADH + 5 H(+)(in) = a quinol + NAD(+) + 4 H(+)(out). In terms of biological role, NDH-1 shuttles electrons from NADH, via FMN and iron-sulfur (Fe-S) centers, to quinones in the respiratory chain. The immediate electron acceptor for the enzyme in this species is believed to be ubiquinone. Couples the redox reaction to proton translocation (for every two electrons transferred, four hydrogen ions are translocated across the cytoplasmic membrane), and thus conserves the redox energy in a proton gradient. This chain is NADH-quinone oxidoreductase subunit D, found in Orientia tsutsugamushi (strain Ikeda) (Rickettsia tsutsugamushi).